A 322-amino-acid polypeptide reads, in one-letter code: 4-hydroxy-3-methylbut-2-enyl diphosphate reductase 1 (322 aa).

[4Fe-4S] cluster is bound at residue Cys-18. (2E)-4-hydroxy-3-methylbut-2-enyl diphosphate-binding residues include His-47 and His-82. Dimethylallyl diphosphate-binding residues include His-47 and His-82. The isopentenyl diphosphate site is built by His-47 and His-82. Cys-104 lines the [4Fe-4S] cluster pocket. His-132 provides a ligand contact to (2E)-4-hydroxy-3-methylbut-2-enyl diphosphate. His-132 is a dimethylallyl diphosphate binding site. An isopentenyl diphosphate-binding site is contributed by His-132. The active-site Proton donor is the Glu-134. Thr-173 is a binding site for (2E)-4-hydroxy-3-methylbut-2-enyl diphosphate. Cys-203 contacts [4Fe-4S] cluster. The (2E)-4-hydroxy-3-methylbut-2-enyl diphosphate site is built by Ser-231, Ser-232, Asn-233, and Ser-276. Dimethylallyl diphosphate-binding residues include Ser-231, Ser-232, Asn-233, and Ser-276. Isopentenyl diphosphate-binding residues include Ser-231, Ser-232, Asn-233, and Ser-276.

The protein belongs to the IspH family. Requires [4Fe-4S] cluster as cofactor.

The enzyme catalyses isopentenyl diphosphate + 2 oxidized [2Fe-2S]-[ferredoxin] + H2O = (2E)-4-hydroxy-3-methylbut-2-enyl diphosphate + 2 reduced [2Fe-2S]-[ferredoxin] + 2 H(+). It carries out the reaction dimethylallyl diphosphate + 2 oxidized [2Fe-2S]-[ferredoxin] + H2O = (2E)-4-hydroxy-3-methylbut-2-enyl diphosphate + 2 reduced [2Fe-2S]-[ferredoxin] + 2 H(+). It participates in isoprenoid biosynthesis; dimethylallyl diphosphate biosynthesis; dimethylallyl diphosphate from (2E)-4-hydroxy-3-methylbutenyl diphosphate: step 1/1. It functions in the pathway isoprenoid biosynthesis; isopentenyl diphosphate biosynthesis via DXP pathway; isopentenyl diphosphate from 1-deoxy-D-xylulose 5-phosphate: step 6/6. In terms of biological role, catalyzes the conversion of 1-hydroxy-2-methyl-2-(E)-butenyl 4-diphosphate (HMBPP) into a mixture of isopentenyl diphosphate (IPP) and dimethylallyl diphosphate (DMAPP). Acts in the terminal step of the DOXP/MEP pathway for isoprenoid precursor biosynthesis. The polypeptide is 4-hydroxy-3-methylbut-2-enyl diphosphate reductase 1 (Bradyrhizobium diazoefficiens (strain JCM 10833 / BCRC 13528 / IAM 13628 / NBRC 14792 / USDA 110)).